Here is a 427-residue protein sequence, read N- to C-terminus: Serine hydroxymethyltransferase (427 aa).

Residues Leu122 and 126-128 (GHL) each bind (6S)-5,6,7,8-tetrahydrofolate. Lys231 is modified (N6-(pyridoxal phosphate)lysine). Residues Glu247 and 355-357 (SPF) each bind (6S)-5,6,7,8-tetrahydrofolate.

This sequence belongs to the SHMT family. Homodimer. It depends on pyridoxal 5'-phosphate as a cofactor.

Its subcellular location is the cytoplasm. The catalysed reaction is (6R)-5,10-methylene-5,6,7,8-tetrahydrofolate + glycine + H2O = (6S)-5,6,7,8-tetrahydrofolate + L-serine. The protein operates within one-carbon metabolism; tetrahydrofolate interconversion. It participates in amino-acid biosynthesis; glycine biosynthesis; glycine from L-serine: step 1/1. Functionally, catalyzes the reversible interconversion of serine and glycine with tetrahydrofolate (THF) serving as the one-carbon carrier. This reaction serves as the major source of one-carbon groups required for the biosynthesis of purines, thymidylate, methionine, and other important biomolecules. Also exhibits THF-independent aldolase activity toward beta-hydroxyamino acids, producing glycine and aldehydes, via a retro-aldol mechanism. This is Serine hydroxymethyltransferase from Crocosphaera subtropica (strain ATCC 51142 / BH68) (Cyanothece sp. (strain ATCC 51142)).